Consider the following 608-residue polypeptide: Glutamine--fructose-6-phosphate aminotransferase [isomerizing] (608 aa).

The Nucleophile; for GATase activity role is filled by cysteine 2. The 216-residue stretch at 2–217 folds into the Glutamine amidotransferase type-2 domain; that stretch reads CGIVGYIGKK…DNEFVLMTKD (216 aa). SIS domains are found at residues 284 to 424 and 453 to 598; these read ISKE…EKGT and IMKK…VDKP. Catalysis depends on lysine 603, which acts as the For Fru-6P isomerization activity.

As to quaternary structure, homodimer.

The protein resides in the cytoplasm. The catalysed reaction is D-fructose 6-phosphate + L-glutamine = D-glucosamine 6-phosphate + L-glutamate. Catalyzes the first step in hexosamine metabolism, converting fructose-6P into glucosamine-6P using glutamine as a nitrogen source. This Clostridium tetani (strain Massachusetts / E88) protein is Glutamine--fructose-6-phosphate aminotransferase [isomerizing].